Consider the following 361-residue polypeptide: 3-dehydroquinate synthase (361 aa).

It belongs to the archaeal-type DHQ synthase family.

The catalysed reaction is 2-amino-2,3,7-trideoxy-D-lyxo-hept-6-ulosonate + NAD(+) + H2O = 3-dehydroquinate + NH4(+) + NADH + H(+). Catalyzes the oxidative deamination and cyclization of 2-amino-3,7-dideoxy-D-threo-hept-6-ulosonic acid (ADH) to yield 3-dehydroquinate (DHQ), which is fed into the canonical shikimic pathway of aromatic amino acid biosynthesis. This Methanococcus maripaludis (strain C5 / ATCC BAA-1333) protein is 3-dehydroquinate synthase.